The following is a 379-amino-acid chain: Succinyl-diaminopimelate desuccinylase (379 aa).

His-70 serves as a coordination point for Zn(2+). Asp-72 is an active-site residue. Asp-103 contacts Zn(2+). Glu-137 functions as the Proton acceptor in the catalytic mechanism. Positions 138, 166, and 352 each coordinate Zn(2+).

It belongs to the peptidase M20A family. DapE subfamily. Homodimer. Requires Zn(2+) as cofactor. Co(2+) serves as cofactor.

The catalysed reaction is N-succinyl-(2S,6S)-2,6-diaminopimelate + H2O = (2S,6S)-2,6-diaminopimelate + succinate. The protein operates within amino-acid biosynthesis; L-lysine biosynthesis via DAP pathway; LL-2,6-diaminopimelate from (S)-tetrahydrodipicolinate (succinylase route): step 3/3. In terms of biological role, catalyzes the hydrolysis of N-succinyl-L,L-diaminopimelic acid (SDAP), forming succinate and LL-2,6-diaminopimelate (DAP), an intermediate involved in the bacterial biosynthesis of lysine and meso-diaminopimelic acid, an essential component of bacterial cell walls. This chain is Succinyl-diaminopimelate desuccinylase, found in Shewanella baltica (strain OS195).